A 141-amino-acid chain; its full sequence is Transcriptional regulator MraZ (141 aa).

SpoVT-AbrB domains follow at residues 5–47 and 76–119; these read TFNI…KPQD and ANFV…DKKL.

The protein belongs to the MraZ family. As to quaternary structure, homooctamer. Forms a ring.

It localises to the cytoplasm. The protein resides in the nucleoid. This chain is Transcriptional regulator MraZ, found in Mycoplasma pneumoniae (strain ATCC 29342 / M129 / Subtype 1) (Mycoplasmoides pneumoniae).